The primary structure comprises 134 residues: 4-carboxymuconolactone decarboxylase (134 aa).

The protein belongs to the carboxymuconolactone decarboxylase family.

It carries out the reaction (R)-2-(carboxymethyl)-5-oxo-2,5-dihydro-2-furoate + H(+) = (4,5-dihydro-5-oxofuran-2-yl)-acetate + CO2. The protein operates within aromatic compound metabolism; beta-ketoadipate pathway; 5-oxo-4,5-dihydro-2-furylacetate from 3-carboxy-cis,cis-muconate: step 2/2. In Acinetobacter baylyi (strain ATCC 33305 / BD413 / ADP1), this protein is 4-carboxymuconolactone decarboxylase (pcaC).